Consider the following 382-residue polypeptide: Carbamoyl phosphate synthase small chain (382 aa).

The tract at residues 1-187 (MPTPALLVLA…EFRPQTATEE (187 aa)) is CPSase. L-glutamine contacts are provided by Ser-47, Gly-239, and Gly-241. One can recognise a Glutamine amidotransferase type-1 domain in the interval 191–377 (TVVAIDFGVK…VAQMRAYRQQ (187 aa)). The active-site Nucleophile is Cys-267. Leu-268, Gln-271, Asn-307, Gly-309, and Phe-310 together coordinate L-glutamine. Residues His-350 and Glu-352 contribute to the active site.

The protein belongs to the CarA family. In terms of assembly, composed of two chains; the small (or glutamine) chain promotes the hydrolysis of glutamine to ammonia, which is used by the large (or ammonia) chain to synthesize carbamoyl phosphate. Tetramer of heterodimers (alpha,beta)4.

It carries out the reaction hydrogencarbonate + L-glutamine + 2 ATP + H2O = carbamoyl phosphate + L-glutamate + 2 ADP + phosphate + 2 H(+). It catalyses the reaction L-glutamine + H2O = L-glutamate + NH4(+). It participates in amino-acid biosynthesis; L-arginine biosynthesis; carbamoyl phosphate from bicarbonate: step 1/1. Its pathway is pyrimidine metabolism; UMP biosynthesis via de novo pathway; (S)-dihydroorotate from bicarbonate: step 1/3. In terms of biological role, small subunit of the glutamine-dependent carbamoyl phosphate synthetase (CPSase). CPSase catalyzes the formation of carbamoyl phosphate from the ammonia moiety of glutamine, carbonate, and phosphate donated by ATP, constituting the first step of 2 biosynthetic pathways, one leading to arginine and/or urea and the other to pyrimidine nucleotides. The small subunit (glutamine amidotransferase) binds and cleaves glutamine to supply the large subunit with the substrate ammonia. The chain is Carbamoyl phosphate synthase small chain from Thermosynechococcus vestitus (strain NIES-2133 / IAM M-273 / BP-1).